The chain runs to 221 residues: Probable septum site-determining protein MinC (221 aa).

Belongs to the MinC family. In terms of assembly, interacts with MinD and FtsZ.

Functionally, cell division inhibitor that blocks the formation of polar Z ring septums. Rapidly oscillates between the poles of the cell to destabilize FtsZ filaments that have formed before they mature into polar Z rings. Prevents FtsZ polymerization. In Aliivibrio fischeri (strain MJ11) (Vibrio fischeri), this protein is Probable septum site-determining protein MinC.